The sequence spans 344 residues: Methionine import ATP-binding protein MetN (344 aa).

The 240-residue stretch at 2 to 241 folds into the ABC transporter domain; sequence IELQGLSQRF…PQHEVTRAMI (240 aa). 38 to 45 lines the ATP pocket; sequence GRSGAGKS.

The protein belongs to the ABC transporter superfamily. Methionine importer (TC 3.A.1.24) family. As to quaternary structure, the complex is composed of two ATP-binding proteins (MetN), two transmembrane proteins (MetI) and a solute-binding protein (MetQ).

It localises to the cell inner membrane. The catalysed reaction is L-methionine(out) + ATP + H2O = L-methionine(in) + ADP + phosphate + H(+). It carries out the reaction D-methionine(out) + ATP + H2O = D-methionine(in) + ADP + phosphate + H(+). Functionally, part of the ABC transporter complex MetNIQ involved in methionine import. Responsible for energy coupling to the transport system. In Cupriavidus metallidurans (strain ATCC 43123 / DSM 2839 / NBRC 102507 / CH34) (Ralstonia metallidurans), this protein is Methionine import ATP-binding protein MetN.